Consider the following 280-residue polypeptide: Beta carbonic anhydrase 4 (280 aa).

The residue at position 2 (A2) is an N-acetylalanine. The stretch at 47–76 (NVAAAKIKALTAELKELDSSNSDAIERIKT) forms a coiled coil. T57 carries the phosphothreonine modification. A Phosphoserine modification is found at S117. Residue C223 is modified to S-nitrosocysteine.

It belongs to the beta-class carbonic anhydrase family. Interacts with DTX56. Strongly expressed in aerial tissues including leaves, stems, flowers and siliques. Accumulates in both guard cells and mesophyll cells.

Its subcellular location is the cell membrane. The catalysed reaction is hydrogencarbonate + H(+) = CO2 + H2O. Reversible hydration of carbon dioxide. Together with BCA1, involved in the CO(2) signaling pathway which controls gas-exchange between plants and the atmosphere by modulating stomatal development and movements. Promotes water use efficiency. The polypeptide is Beta carbonic anhydrase 4 (Arabidopsis thaliana (Mouse-ear cress)).